The following is a 679-amino-acid chain: Protein CASP (679 aa).

Residues 1-614 lie on the Cytoplasmic side of the membrane; it reads MDTSVYSHAL…VILQNKMTRM (614 aa). Coiled coils occupy residues 14-90 and 178-341; these read AKAD…EKVL and RNWK…NYSD. Ser-364 carries the post-translational modification Phosphoserine. Residues 385 to 444 are a coiled coil; the sequence is ANKKLQATLAEYRSKSTAQEEERNELKKSVDQLKQQIATLKEANEKLETDLEKVENVSPH. Phosphoserine is present on residues Ser-450 and Ser-453. Positions 492-540 form a coiled coil; that stretch reads IVTKQRDRFRSRNMDLEKQLRQGNSEKGKLKLEISKLKGDNTKLYERIR. Phosphoserine is present on Ser-555. Residues 615 to 635 traverse the membrane as a helical; Anchor for type IV membrane protein segment; it reads VFLFYCIGLHGLVFMMSMYVI. The Lumenal segment spans residues 636 to 679; that stretch reads NISGYMTPEVGIVQSAKSSSNLNGGLGGAEKVAAGVGSVHGINR.

This sequence belongs to the CASP family.

It localises to the golgi apparatus membrane. Functionally, may be involved in intra-Golgi transport. This Saccharomyces cerevisiae (strain ATCC 204508 / S288c) (Baker's yeast) protein is Protein CASP (COY1).